The chain runs to 492 residues: Probable malate:quinone oxidoreductase 1 (492 aa).

It belongs to the MQO family. FAD serves as cofactor.

The catalysed reaction is (S)-malate + a quinone = a quinol + oxaloacetate. The protein operates within carbohydrate metabolism; tricarboxylic acid cycle; oxaloacetate from (S)-malate (quinone route): step 1/1. This Staphylococcus aureus (strain MRSA252) protein is Probable malate:quinone oxidoreductase 1.